An 811-amino-acid polypeptide reads, in one-letter code: Zinc finger protein 839 (811 aa).

The segment at 197–222 adopts a C2H2-type zinc-finger fold; that stretch reads FKCQTCEKSYIGKGGLARHFKLNPGH. 3 disordered regions span residues 329–349, 455–555, and 612–654; these read QRRA…RASP, PDNL…NGSV, and ALEH…AEAG. Over residues 476 to 485 the composition is skewed to basic and acidic residues; that stretch reads SSEKREREAA. Positions 501–510 are enriched in polar residues; sequence SNDTTESLAA.

This chain is Zinc finger protein 839 (ZNF839), found in Homo sapiens (Human).